The primary structure comprises 198 residues: MRNNKNQMYIIKIFIALAMITGIIFLCLFYSSLTPSKLKIGAKTSNMDDSPKIKFTLIDQEGKKFDSTHLQGHLSLIYFGTTYSLYDNQALKRVEDIIKILKKENIVVQVVFITLDPQHDTSEVLKKYLEKIDDNFIGLTGRVQDIEQLADQFKVFYTSKIFDVKTNEYELQHSNFVYLISSQGKFLKHYCLGLPKNG.

The protein belongs to the SCO1/2 family.

The sequence is that of SCO2-like protein RF_0043 from Rickettsia felis (strain ATCC VR-1525 / URRWXCal2) (Rickettsia azadi).